The following is a 251-amino-acid chain: Pyrroloquinoline-quinone synthase (251 aa).

It belongs to the PqqC family.

It catalyses the reaction 6-(2-amino-2-carboxyethyl)-7,8-dioxo-1,2,3,4,7,8-hexahydroquinoline-2,4-dicarboxylate + 3 O2 = pyrroloquinoline quinone + 2 H2O2 + 2 H2O + H(+). It functions in the pathway cofactor biosynthesis; pyrroloquinoline quinone biosynthesis. In terms of biological role, ring cyclization and eight-electron oxidation of 3a-(2-amino-2-carboxyethyl)-4,5-dioxo-4,5,6,7,8,9-hexahydroquinoline-7,9-dicarboxylic-acid to PQQ. This Klebsiella pneumoniae (strain 342) protein is Pyrroloquinoline-quinone synthase.